Reading from the N-terminus, the 1138-residue chain is Condensin-2 complex subunit G2 (1138 aa).

S30 carries the phosphoserine modification. Residues 459 to 497 (LLPTLRYSLHDNSEKVRVAFVDLLLKIKAVRAAKFWKIC) form an HEAT repeat. T1114 carries the post-translational modification Phosphothreonine.

In terms of assembly, component of the condensin-2 complex, which contains the SMC2 and SMC4 heterodimer, and 3 non SMC subunits that probably regulate the complex: NCAPH2, NCAPD3 and NCAPG2. As to expression, expressed in spleen, lung and testis as well as in hematopoietic cell lines.

The protein resides in the nucleus. Its function is as follows. Regulatory subunit of the condensin-2 complex, a complex which establishes mitotic chromosome architecture and is involved in physical rigidity of the chromatid axis. Is required for early embryonic development and is essential for viability and expansion of the inner cell mass (ICM) of the implanting blastocyst. This Mus musculus (Mouse) protein is Condensin-2 complex subunit G2 (Ncapg2).